A 151-amino-acid polypeptide reads, in one-letter code: MGSDDQSAADKIQKGFQINYMILRDADSGKIIWQENKDFSAPDVEHEARVPVKILDMRAVSREINFSTVESMENFRLDQKVLFKGRIMEEWFFEMGFVGASTTNTWQSTIEAAPESQMMPAKVLNGNVTIQTSFYDNETLITKSVVRLYYI.

This sequence belongs to the PDE6D/unc-119 family. Interacts with Pde6.

The protein localises to the nucleus. It localises to the cytoplasm. The sequence is that of Probable cGMP 3',5'-cyclic phosphodiesterase subunit delta from Drosophila persimilis (Fruit fly).